We begin with the raw amino-acid sequence, 139 residues long: ATP synthase epsilon chain (139 aa).

Belongs to the ATPase epsilon chain family. In terms of assembly, F-type ATPases have 2 components, CF(1) - the catalytic core - and CF(0) - the membrane proton channel. CF(1) has five subunits: alpha(3), beta(3), gamma(1), delta(1), epsilon(1). CF(0) has three main subunits: a, b and c.

It localises to the cell inner membrane. Produces ATP from ADP in the presence of a proton gradient across the membrane. The protein is ATP synthase epsilon chain of Salmonella typhimurium (strain LT2 / SGSC1412 / ATCC 700720).